A 442-amino-acid chain; its full sequence is Probable 6-phospho-beta-glucosidase (442 aa).

5-73 (LKIVTIGGGS…VPIDIHLTLD (69 aa)) contacts NAD(+). Substrate-binding residues include Arg-96 and Asn-150. The Mn(2+) site is built by Cys-172 and His-202. The active-site Proton acceptor is the Tyr-256.

Belongs to the glycosyl hydrolase 4 family. It depends on NAD(+) as a cofactor. Requires a divalent metal cation as cofactor.

It carries out the reaction 6-phospho-beta-D-glucosyl-(1-&gt;4)-D-glucose + H2O = D-glucose 6-phosphate + D-glucose. Hydrolyzes phospho-beta-glucosides. In Bacillus subtilis (strain 168), this protein is Probable 6-phospho-beta-glucosidase (licH).